The primary structure comprises 473 residues: Chromosomal replication initiator protein DnaA (473 aa).

The segment at 1 to 90 is domain I, interacts with DnaA modulators; that stretch reads MSSSLWLQCL…KRVTAPKSET (90 aa). Positions 91–136 are domain II; sequence IAPARTRTAADVAAESSAPAQLQARKPVHNIWRDEEPVAVDLNHRS. Positions 137 to 353 are domain III, AAA+ region; that stretch reads NVNPKHKFNN…GALNRVIANA (217 aa). Residues Gly-181, Gly-183, Lys-184, and Thr-185 each coordinate ATP. The tract at residues 354 to 473 is domain IV, binds dsDNA; it reads NFTGRPITID…YSNLIRTLSS (120 aa).

Belongs to the DnaA family. In terms of assembly, oligomerizes as a right-handed, spiral filament on DNA at oriC.

The protein localises to the cytoplasm. In terms of biological role, plays an essential role in the initiation and regulation of chromosomal replication. ATP-DnaA binds to the origin of replication (oriC) to initiate formation of the DNA replication initiation complex once per cell cycle. Binds the DnaA box (a 9 base pair repeat at the origin) and separates the double-stranded (ds)DNA. Forms a right-handed helical filament on oriC DNA; dsDNA binds to the exterior of the filament while single-stranded (ss)DNA is stabiized in the filament's interior. The ATP-DnaA-oriC complex binds and stabilizes one strand of the AT-rich DNA unwinding element (DUE), permitting loading of DNA polymerase. After initiation quickly degrades to an ADP-DnaA complex that is not apt for DNA replication. Binds acidic phospholipids. The sequence is that of Chromosomal replication initiator protein DnaA from Vibrio atlanticus (strain LGP32) (Vibrio splendidus (strain Mel32)).